Consider the following 1210-residue polypeptide: Ice nucleation protein (1210 aa).

Residues 165 to 1156 (AVYGSTLTGA…LSGGENSTLI (992 aa)) are octapeptide periodicity.

Belongs to the bacterial ice nucleation protein family.

It localises to the cell outer membrane. Its function is as follows. Ice nucleation proteins enable bacteria to nucleate crystallization in supercooled water. This is Ice nucleation protein (inaW) from Pseudomonas fluorescens.